Consider the following 332-residue polypeptide: NADH-quinone oxidoreductase subunit H (332 aa).

The next 9 helical transmembrane spans lie at Phe-4–Ser-24, Ile-44–Leu-64, Phe-78–Ile-98, Val-120–Gly-140, Val-165–Ile-185, Phe-194–Ile-214, Ile-255–Ile-275, Ile-279–Phe-299, and Tyr-312–Leu-332.

It belongs to the complex I subunit 1 family. NDH-1 is composed of 14 different subunits. Subunits NuoA, H, J, K, L, M, N constitute the membrane sector of the complex.

The protein localises to the cell inner membrane. The enzyme catalyses a quinone + NADH + 5 H(+)(in) = a quinol + NAD(+) + 4 H(+)(out). In terms of biological role, NDH-1 shuttles electrons from NADH, via FMN and iron-sulfur (Fe-S) centers, to quinones in the respiratory chain. The immediate electron acceptor for the enzyme in this species is believed to be ubiquinone. Couples the redox reaction to proton translocation (for every two electrons transferred, four hydrogen ions are translocated across the cytoplasmic membrane), and thus conserves the redox energy in a proton gradient. This subunit may bind ubiquinone. The polypeptide is NADH-quinone oxidoreductase subunit H (Campylobacter jejuni subsp. jejuni serotype O:2 (strain ATCC 700819 / NCTC 11168)).